A 185-amino-acid polypeptide reads, in one-letter code: Ribosome-recycling factor (185 aa).

The protein belongs to the RRF family.

The protein localises to the cytoplasm. Functionally, responsible for the release of ribosomes from messenger RNA at the termination of protein biosynthesis. May increase the efficiency of translation by recycling ribosomes from one round of translation to another. This is Ribosome-recycling factor from Aliivibrio fischeri (strain ATCC 700601 / ES114) (Vibrio fischeri).